Here is an 86-residue protein sequence, read N- to C-terminus: Photosystem I reaction center subunit PsaK (86 aa).

2 consecutive transmembrane segments (helical) span residues 14 to 34 (LQWS…AIAF) and 57 to 77 (FGLP…VGAV).

It belongs to the PsaG/PsaK family.

Its subcellular location is the cellular thylakoid membrane. The protein is Photosystem I reaction center subunit PsaK of Nostoc punctiforme (strain ATCC 29133 / PCC 73102).